Here is a 165-residue protein sequence, read N- to C-terminus: RNA pyrophosphohydrolase (165 aa).

Residues Gly6–Thr149 enclose the Nudix hydrolase domain. The Nudix box signature appears at Gly38–Gly59.

The protein belongs to the Nudix hydrolase family. RppH subfamily. It depends on a divalent metal cation as a cofactor.

Accelerates the degradation of transcripts by removing pyrophosphate from the 5'-end of triphosphorylated RNA, leading to a more labile monophosphorylated state that can stimulate subsequent ribonuclease cleavage. The protein is RNA pyrophosphohydrolase of Hydrogenovibrio crunogenus (strain DSM 25203 / XCL-2) (Thiomicrospira crunogena).